The following is a 276-amino-acid chain: Kallikrein-10 (276 aa).

A signal peptide spans 1 to 30 (MRAPHLHLSAASGARALAKLLPLLMAQLWA). A glycan (N-linked (GlcNAc...) asparagine) is linked at N39. In terms of domain architecture, Peptidase S1 spans 47-274 (AYGSPCARGS…YMSWINKVIR (228 aa)). 5 disulfide bridges follow: C52–C162, C71–C87, C169–C235, C201–C215, and C225–C250. Residues H86 and D137 each act as charge relay system in the active site. The Charge relay system role is filled by S229.

This sequence belongs to the peptidase S1 family. Kallikrein subfamily. As to expression, expressed in breast, ovary and prostate.

It localises to the secreted. In terms of biological role, has a tumor-suppressor role for NES1 in breast and prostate cancer. In Homo sapiens (Human), this protein is Kallikrein-10 (KLK10).